The sequence spans 371 residues: Ligninase LG2 (371 aa).

The first 21 residues, 1-21 (MAFKQLFAAITVALSLTAANA), serve as a signal peptide directing secretion. Residues 22 to 28 (AVVKEKR) constitute a propeptide that is removed on maturation. Cystine bridges form between Cys31/Cys43, Cys42/Cys313, Cys62/Cys148, and Cys277/Cys345. The Proton acceptor role is filled by His75. Positions 76, 94, 96, and 98 each coordinate Ca(2+). Trp199 is modified (3-hydroxytryptophan). His204 lines the heme b pocket. 5 residues coordinate Ca(2+): Ser205, Asp222, Thr224, Ile227, and Asp229. Asn285 is a glycosylation site (N-linked (GlcNAc...) asparagine).

The protein belongs to the peroxidase family. Ligninase subfamily. Requires Ca(2+) as cofactor. Heme b is required as a cofactor.

It carries out the reaction 1-(3,4-dimethoxyphenyl)-2-(2-methoxyphenoxy)propane-1,3-diol + H2O2 = 3,4-dimethoxybenzaldehyde + guaiacol + glycolaldehyde + H2O. It catalyses the reaction 2 (3,4-dimethoxyphenyl)methanol + H2O2 = 2 (3,4-dimethoxyphenyl)methanol radical + 2 H2O. The protein operates within secondary metabolite metabolism; lignin degradation. Functionally, depolymerization of lignin. Catalyzes the C(alpha)-C(beta) cleavage of the propyl side chains of lignin. This is Ligninase LG2 (GLG2) from Phanerodontia chrysosporium (White-rot fungus).